A 236-amino-acid chain; its full sequence is Purine nucleoside phosphorylase DeoD-type (236 aa).

Histidine 4 provides a ligand contact to a purine D-ribonucleoside. Phosphate contacts are provided by residues glycine 20, arginine 24, arginine 43, and 87–90; that span reads RVGT. A purine D-ribonucleoside is bound by residues 179–181 and 203–204; these read EME and SD. The Proton donor role is filled by aspartate 204.

It belongs to the PNP/UDP phosphorylase family. In terms of assembly, homohexamer; trimer of homodimers.

The enzyme catalyses a purine D-ribonucleoside + phosphate = a purine nucleobase + alpha-D-ribose 1-phosphate. The catalysed reaction is a purine 2'-deoxy-D-ribonucleoside + phosphate = a purine nucleobase + 2-deoxy-alpha-D-ribose 1-phosphate. Its function is as follows. Catalyzes the reversible phosphorolytic breakdown of the N-glycosidic bond in the beta-(deoxy)ribonucleoside molecules, with the formation of the corresponding free purine bases and pentose-1-phosphate. The sequence is that of Purine nucleoside phosphorylase DeoD-type from Streptococcus thermophilus (strain ATCC BAA-491 / LMD-9).